The chain runs to 164 residues: B-phycoerythrin alpha chain (164 aa).

(2R,3E)-phycoerythrobilin contacts are provided by Cys82 and Cys139.

Belongs to the phycobiliprotein family. Heteromer of 6 alpha, 6 beta and one gamma chain. Contains two covalently linked bilin chromophores.

The protein localises to the plastid. It localises to the chloroplast thylakoid membrane. In terms of biological role, light-harvesting photosynthetic bile pigment-protein from the phycobiliprotein complex. This Porphyridium sordidum (Red alga) protein is B-phycoerythrin alpha chain (cpeA).